Reading from the N-terminus, the 387-residue chain is WD repeat-containing protein 89 (387 aa).

WD repeat units follow at residues 21–65, 68–107, 112–156, 168–208, 214–254, and 319–358; these read KEPT…VLRE, GYPG…EKPV, GYPS…QNLS, THSD…EEDA, NSIS…TDEP, and GHAA…KTFT.

The sequence is that of WD repeat-containing protein 89 (WDR89) from Homo sapiens (Human).